We begin with the raw amino-acid sequence, 1035 residues long: Isoleucine--tRNA ligase (1035 aa).

Positions 48–58 (PTANGRPHVGH) match the 'HIGH' region motif. Positions 589-593 (KMSKH) match the 'KMSKS' region motif. Lys-592 contacts ATP.

Belongs to the class-I aminoacyl-tRNA synthetase family. IleS type 2 subfamily. Monomer. Zn(2+) serves as cofactor.

It is found in the cytoplasm. It carries out the reaction tRNA(Ile) + L-isoleucine + ATP = L-isoleucyl-tRNA(Ile) + AMP + diphosphate. Its function is as follows. Catalyzes the attachment of isoleucine to tRNA(Ile). As IleRS can inadvertently accommodate and process structurally similar amino acids such as valine, to avoid such errors it has two additional distinct tRNA(Ile)-dependent editing activities. One activity is designated as 'pretransfer' editing and involves the hydrolysis of activated Val-AMP. The other activity is designated 'posttransfer' editing and involves deacylation of mischarged Val-tRNA(Ile). This is Isoleucine--tRNA ligase from Clostridium acetobutylicum (strain ATCC 824 / DSM 792 / JCM 1419 / IAM 19013 / LMG 5710 / NBRC 13948 / NRRL B-527 / VKM B-1787 / 2291 / W).